Here is an 894-residue protein sequence, read N- to C-terminus: Leucine--tRNA ligase, mitochondrial (894 aa).

The N-terminal 9 residues, 1–9, are a transit peptide targeting the mitochondrion; it reads MLSRPSSRF. The short motif at 56-66 is the 'HIGH' region element; the sequence is PYPSGALHIGH. The short motif at 646 to 650 is the 'KMSKS' region element; it reads KMSKS. Position 649 (Lys-649) interacts with ATP.

Belongs to the class-I aminoacyl-tRNA synthetase family.

It is found in the mitochondrion matrix. It catalyses the reaction tRNA(Leu) + L-leucine + ATP = L-leucyl-tRNA(Leu) + AMP + diphosphate. In terms of biological role, catalyzes the attachment of leucine to tRNA(Leu) in the mitochondrion. This is Leucine--tRNA ligase, mitochondrial (NAM2) from Saccharomyces cerevisiae (strain ATCC 204508 / S288c) (Baker's yeast).